A 125-amino-acid chain; its full sequence is Small ribosomal subunit protein bS6m (125 aa).

The protein belongs to the bacterial ribosomal protein bS6 family. In terms of assembly, component of the mitochondrial ribosome small subunit (28S) which comprises a 12S rRNA and about 30 distinct proteins.

Its subcellular location is the mitochondrion. The protein is Small ribosomal subunit protein bS6m (Mrps6) of Mus musculus (Mouse).